The primary structure comprises 386 residues: Succinate--CoA ligase [ADP-forming] subunit beta (386 aa).

The 236-residue stretch at 9–244 folds into the ATP-grasp domain; the sequence is KEILHKFNVP…YDEEVKEEIE (236 aa). Residues K46, 53 to 55, E99, S102, and E107 each bind ATP; that span reads GRG. The Mg(2+) site is built by N199 and D213. Substrate contacts are provided by residues N264 and 321–323; that span reads GIM.

The protein belongs to the succinate/malate CoA ligase beta subunit family. In terms of assembly, heterotetramer of two alpha and two beta subunits. Mg(2+) is required as a cofactor.

It carries out the reaction succinate + ATP + CoA = succinyl-CoA + ADP + phosphate. The enzyme catalyses GTP + succinate + CoA = succinyl-CoA + GDP + phosphate. It functions in the pathway carbohydrate metabolism; tricarboxylic acid cycle; succinate from succinyl-CoA (ligase route): step 1/1. In terms of biological role, succinyl-CoA synthetase functions in the citric acid cycle (TCA), coupling the hydrolysis of succinyl-CoA to the synthesis of either ATP or GTP and thus represents the only step of substrate-level phosphorylation in the TCA. The beta subunit provides nucleotide specificity of the enzyme and binds the substrate succinate, while the binding sites for coenzyme A and phosphate are found in the alpha subunit. This Wolbachia pipientis subsp. Culex pipiens (strain wPip) protein is Succinate--CoA ligase [ADP-forming] subunit beta.